We begin with the raw amino-acid sequence, 186 residues long: Putative manganese efflux pump MntP (186 aa).

The next 6 membrane-spanning stretches (helical) occupy residues 1–21, 41–61, 62–82, 105–127, 139–159, and 163–183; these read MSFL…FAVS, VFFG…GSAV, SGFV…FIGG, LFLL…AFLG, CVTF…GHFF, and VEIL…AEHM.

This sequence belongs to the MntP (TC 9.B.29) family.

It is found in the cell membrane. In terms of biological role, probably functions as a manganese efflux pump. The polypeptide is Putative manganese efflux pump MntP (Methanosarcina mazei (strain ATCC BAA-159 / DSM 3647 / Goe1 / Go1 / JCM 11833 / OCM 88) (Methanosarcina frisia)).